The following is a 97-amino-acid chain: Mitochondrial import inner membrane translocase subunit Tim8 A (97 aa).

The Twin CX3C motif motif lies at 43–66 (CWEKCMDKPGPKLDSRAEACFVNC). Intrachain disulfides connect cysteine 43–cysteine 66 and cysteine 47–cysteine 62. A phosphoserine mark is found at serine 57, serine 87, serine 94, and serine 96.

This sequence belongs to the small Tim family. As to quaternary structure, heterohexamer; composed of 3 copies of TIMM8A and 3 copies of TIMM13, named soluble 70 kDa complex. Associates with the TIM22 complex, whose core is composed of TIMM22. As to expression, present at high level in liver and brain, and at lower level in muscle and heart. In CNS sections, it is predominantly present in the soma and the dendritic portion of the Purkinje cells of the cerebellum, but not in the glial cells. Scattered expression also is also detected in the brain stem, olfactory bulb, substantia nigra, hippocampus and striatum (at protein level). Ubiquitously expressed.

The protein localises to the mitochondrion inner membrane. Functionally, mitochondrial intermembrane chaperone that participates in the import and insertion of some multi-pass transmembrane proteins into the mitochondrial inner membrane. Also required for the transfer of beta-barrel precursors from the TOM complex to the sorting and assembly machinery (SAM complex) of the outer membrane. Acts as a chaperone-like protein that protects the hydrophobic precursors from aggregation and guide them through the mitochondrial intermembrane space. The TIMM8-TIMM13 complex mediates the import of proteins such as TIMM23, SLC25A12/ARALAR1 and SLC25A13/ARALAR2, while the predominant TIMM9-TIMM10 70 kDa complex mediates the import of much more proteins. The protein is Mitochondrial import inner membrane translocase subunit Tim8 A (Timm8a1) of Mus musculus (Mouse).